The following is a 239-amino-acid chain: tRNA (guanine-N(1)-)-methyltransferase (239 aa).

S-adenosyl-L-methionine-binding positions include glycine 109 and 128-133 (IGDYVL).

It belongs to the RNA methyltransferase TrmD family. Homodimer.

It localises to the cytoplasm. It catalyses the reaction guanosine(37) in tRNA + S-adenosyl-L-methionine = N(1)-methylguanosine(37) in tRNA + S-adenosyl-L-homocysteine + H(+). In terms of biological role, specifically methylates guanosine-37 in various tRNAs. The sequence is that of tRNA (guanine-N(1)-)-methyltransferase from Thermus thermophilus (strain ATCC 27634 / DSM 579 / HB8).